The following is a 307-amino-acid chain: Fe-S cluster assembly protein dre2 (307 aa).

Disordered stretches follow at residues 1 to 26 (MTPV…PSTS) and 159 to 179 (KKKK…VGFV). A compositionally biased stretch (low complexity) spans 15–26 (AAPPTKTAPSTS). Residues 23 to 152 (PSTSTRTLLL…EKPAYQEAAV (130 aa)) are N-terminal SAM-like domain. Residues 153–197 (PLRLGGKKKKAPAPTEQPPVATGVGFVDGNDELIDEDDLLSDDDL) are linker. 4 residues coordinate [2Fe-2S] cluster: Cys207, Cys219, Cys222, and Cys224. Residues 207-224 (CQPEKAKKRRRPCKDCTC) form a fe-S binding site A region. [4Fe-4S] cluster-binding residues include Cys270, Cys273, Cys281, and Cys284. Short sequence motifs (cx2C motif) lie at residues 270–273 (CNSC) and 281–284 (CSSC). Residues 270–284 (CNSCSLGDAFRCSSC) are fe-S binding site B.

Belongs to the anamorsin family. In terms of assembly, monomer. Interacts with tah18. Interacts with mia40. [2Fe-2S] cluster is required as a cofactor. It depends on [4Fe-4S] cluster as a cofactor.

The protein resides in the cytoplasm. The protein localises to the mitochondrion intermembrane space. Its function is as follows. Component of the cytosolic iron-sulfur (Fe-S) protein assembly (CIA) machinery required for the maturation of extramitochondrial Fe-S proteins. Part of an electron transfer chain functioning in an early step of cytosolic Fe-S biogenesis, facilitating the de novo assembly of a [4Fe-4S] cluster on the scaffold complex cfd1-nbp35. Electrons are transferred to dre2 from NADPH via the FAD- and FMN-containing protein tah18. Tah18-dre2 are also required for the assembly of the diferric tyrosyl radical cofactor of ribonucleotide reductase (RNR), probably by providing electrons for reduction during radical cofactor maturation in the catalytic small subunit rnr2. The polypeptide is Fe-S cluster assembly protein dre2 (Aspergillus terreus (strain NIH 2624 / FGSC A1156)).